Here is a 90-residue protein sequence, read N- to C-terminus: Cell division topological specificity factor (90 aa).

Belongs to the MinE family.

Its function is as follows. Prevents the cell division inhibition by proteins MinC and MinD at internal division sites while permitting inhibition at polar sites. This ensures cell division at the proper site by restricting the formation of a division septum at the midpoint of the long axis of the cell. The polypeptide is Cell division topological specificity factor (Bordetella avium (strain 197N)).